The chain runs to 414 residues: Imidazolonepropionase (414 aa).

Histidine 95 and histidine 97 together coordinate Fe(3+). Zn(2+) is bound by residues histidine 95 and histidine 97. 4-imidazolone-5-propanoate-binding residues include arginine 104, tyrosine 162, and histidine 189. Tyrosine 162 serves as a coordination point for N-formimidoyl-L-glutamate. Histidine 252 serves as a coordination point for Fe(3+). Zn(2+) is bound at residue histidine 252. Glutamine 255 lines the 4-imidazolone-5-propanoate pocket. A Fe(3+)-binding site is contributed by aspartate 326. Position 326 (aspartate 326) interacts with Zn(2+). N-formimidoyl-L-glutamate contacts are provided by asparagine 328 and glycine 330. Serine 331 lines the 4-imidazolone-5-propanoate pocket.

It belongs to the metallo-dependent hydrolases superfamily. HutI family. The cofactor is Zn(2+). It depends on Fe(3+) as a cofactor.

The protein resides in the cytoplasm. It catalyses the reaction 4-imidazolone-5-propanoate + H2O = N-formimidoyl-L-glutamate. The protein operates within amino-acid degradation; L-histidine degradation into L-glutamate; N-formimidoyl-L-glutamate from L-histidine: step 3/3. Catalyzes the hydrolytic cleavage of the carbon-nitrogen bond in imidazolone-5-propanoate to yield N-formimidoyl-L-glutamate. It is the third step in the universal histidine degradation pathway. This is Imidazolonepropionase from Streptomyces avermitilis (strain ATCC 31267 / DSM 46492 / JCM 5070 / NBRC 14893 / NCIMB 12804 / NRRL 8165 / MA-4680).